Consider the following 443-residue polypeptide: Mimosinase, chloroplastic (443 aa).

Residues 1 to 43 (MALSSTFLNPLVSSVAVNPQPKITSGKGFRVNCLIRTQQTVIK) constitute a chloroplast transit peptide. Pyridoxal 5'-phosphate is bound by residues Tyr-105, Arg-107, Gly-135, Met-136, Ser-254, and Thr-256. Residue Lys-257 is modified to N6-(pyridoxal phosphate)lysine.

This sequence belongs to the trans-sulfuration enzymes family. Forms homodimers. May form homotetramers from two homodimers. Pyridoxal 5'-phosphate is required as a cofactor.

Its subcellular location is the plastid. The protein localises to the chloroplast. It carries out the reaction L-mimosine + H2O = 3-hydroxy-4H-pyrid-4-one + pyruvate + NH4(+). Catalyzes the degradation of mimosine, which is a toxic secondary metabolite found in all Leucaena and Mimosa species. The chain is Mimosinase, chloroplastic from Leucaena leucocephala (White popinac).